A 308-amino-acid polypeptide reads, in one-letter code: Sulfate adenylyltransferase subunit 2 (308 aa).

The disordered stretch occupies residues R286–F308.

Belongs to the PAPS reductase family. CysD subfamily. In terms of assembly, heterodimer composed of CysD, the smaller subunit, and CysN.

It catalyses the reaction sulfate + ATP + H(+) = adenosine 5'-phosphosulfate + diphosphate. Its pathway is sulfur metabolism; hydrogen sulfide biosynthesis; sulfite from sulfate: step 1/3. Functionally, with CysN forms the ATP sulfurylase (ATPS) that catalyzes the adenylation of sulfate producing adenosine 5'-phosphosulfate (APS) and diphosphate, the first enzymatic step in sulfur assimilation pathway. APS synthesis involves the formation of a high-energy phosphoric-sulfuric acid anhydride bond driven by GTP hydrolysis by CysN coupled to ATP hydrolysis by CysD. This chain is Sulfate adenylyltransferase subunit 2, found in Nocardia farcinica (strain IFM 10152).